The primary structure comprises 181 residues: Cytochrome c-type biogenesis protein CcmE (181 aa).

At 1-8 (MNPRRKSR) the chain is on the cytoplasmic side. The helical; Signal-anchor for type II membrane protein transmembrane segment at 9–29 (LKVVVLIMFSVAVAAGLTLYA) threads the bilayer. Residues 30–181 (LSQNIDLFYT…TFNTLQGESK (152 aa)) lie on the Periplasmic side of the membrane. 2 residues coordinate heme: His-131 and Tyr-135.

It belongs to the CcmE/CycJ family.

It is found in the cell inner membrane. Functionally, heme chaperone required for the biogenesis of c-type cytochromes. Transiently binds heme delivered by CcmC and transfers the heme to apo-cytochromes in a process facilitated by CcmF and CcmH. This is Cytochrome c-type biogenesis protein CcmE from Haemophilus ducreyi (strain 35000HP / ATCC 700724).